Reading from the N-terminus, the 568-residue chain is Chaperonin homolog Hsp-60, mitochondrial (568 aa).

The protein belongs to the chaperonin (HSP60) family.

Its subcellular location is the mitochondrion matrix. Implicated in mitochondrial protein import and macromolecular assembly. May facilitate the correct folding of imported proteins. May also prevent misfolding and promote the refolding and proper assembly of unfolded polypeptides generated under stress conditions in the mitochondrial matrix. The protein is Chaperonin homolog Hsp-60, mitochondrial (hsp-60) of Caenorhabditis elegans.